The following is a 324-amino-acid chain: mRNA decay activator protein ZFP36 (324 aa).

A necessary for nuclear export region spans residues Met1–Pro15. A necessary and sufficient for the association with mRNA decay enzymes and mRNA decay activation region spans residues Met1–Thr98. Necessary for localization of ARE-containing mRNAs to processing bodies (PBs) stretches follow at residues Met1–Ala172 and Thr98–Glu324. Residues Pro15–Pro46 show a composition bias toward low complexity. A disordered region spans residues Pro15–Ala50. Ser58 carries the post-translational modification Phosphoserine; by MAPKAPK2. Ser64 is modified (phosphoserine). A P-P-P-P-G repeat occupies Pro69–Gly73. The disordered stretch occupies residues Pro76 to Ser100. 2 positions are modified to phosphoserine: Ser86 and Ser88. Thr90 carries the phosphothreonine modification. Ser91 carries the phosphoserine modification. Residues Thr93 to Pro166 form a necessary for nuclear localization region. The interval Thr95 to Ala171 is necessary for RNA-binding. 2 consecutive C3H1-type zinc fingers follow at residues Arg101–Gly129 and Lys139–Ser167. Residues Arg101–Arg192 form a necessary for interaction with PABPN1 region. Ser167 is subject to Phosphoserine. Residues Ala172 to Glu324 form a necessary for mRNA decay activation region. Ser184 is modified (phosphoserine; by MAPKAPK2). Disordered stretches follow at residues Phe185–Ser227 and Pro270–Glu324. Position 195 is a phosphoserine (Ser195). Residues Pro196–Ser200 form a P-P-P-P-G repeat. Over residues Pro204–Ser214 the composition is skewed to low complexity. Ser216 is modified (phosphoserine). Residues Pro218–Gly222 form a P-P-P-P-G repeat. At Ser227 the chain carries Phosphoserine; by MAPK1; in vitro. A phosphoserine mark is found at Ser274, Ser294, and Ser321. Residues Ala310–Glu324 form an interaction with CNOT1 region.

As to quaternary structure, associates with cytoplasmic CCR4-NOT and PAN2-PAN3 deadenylase complexes to trigger ARE-containing mRNA deadenylation and decay processes. Part of a mRNA decay activation complex at least composed of poly(A)-specific exoribonucleases CNOT6, EXOSC2 and XRN1 and mRNA-decapping enzymes DCP1A and DCP2. Associates with the RNA exosome complex. Interacts (via phosphorylated form) with 14-3-3 proteins; these interactions promote exclusion of ZFP36 from cytoplasmic stress granules in response to arsenite treatment in a MAPKAPK2-dependent manner and does not prevent CCR4-NOT deadenylase complex recruitment or ZFP36-induced ARE-containing mRNA deadenylation and decay processes. Interacts with 14-3-3 proteins; these interactions occur in response to rapamycin in an Akt-dependent manner. Interacts with AGO2 and AGO4. Interacts (via C-terminus) with CNOT1; this interaction occurs in a RNA-independent manner and induces mRNA deadenylation. Interacts (via N-terminus) with CNOT6. Interacts with CNOT6L. Interacts (via C-terminus) with CNOT7; this interaction occurs in a RNA-independent manner, induces mRNA deadenylation and is inhibited in a phosphorylation MAPKAPK2-dependent manner. Interacts (via unphosphorylated form) with CNOT8; this interaction occurs in a RNA-independent manner and is inhibited in a phosphorylation MAPKAPK2-dependent manner. Interacts with DCP1A. Interacts (via N-terminus) with DCP2. Interacts with EDC3. Interacts (via N-terminus) with EXOSC2. Interacts with heat shock 70 kDa proteins. Interacts with KHSRP; this interaction increases upon cytokine-induced treatment. Interacts with MAP3K4; this interaction enhances the association with SH3KBP1/CIN85. Interacts with MAPKAPK2; this interaction occurs upon skeletal muscle satellite cell activation. Interacts with NCL. Interacts with NUP214; this interaction increases upon lipopolysaccharide (LPS) stimulation. Interacts with PABPC1; this interaction occurs in a RNA-dependent manner. Interacts (via hypophosphorylated form) with PABPN1 (via RRM domain and C-terminal arginine-rich region); this interaction occurs in the nucleus in a RNA-independent manner, decreases in presence of single-stranded poly(A) RNA-oligomer and in a p38 MAPK-dependent-manner and inhibits nuclear poly(A) tail synthesis. Interacts with PAN2. Interacts (via C3H1-type zinc finger domains) with PKM. Interacts (via C3H1-type zinc finger domains) with nuclear RNA poly(A) polymerase. Interacts with PPP2CA; this interaction occurs in LPS-stimulated cells and induces ZFP36 dephosphorylation, and hence may promote ARE-containing mRNAs decay. Interacts (via C-terminus) with PRR5L (via C-terminus); this interaction may accelerate ZFP36-mediated mRNA decay during stress. Interacts (via C-terminus) with SFN; this interaction occurs in a phosphorylation-dependent manner. Interacts (via extreme C-terminal region) with SH3KBP1/CIN85 (via SH3 domains); this interaction enhances MAP3K4-induced phosphorylation of ZFP36 at Ser-64 and Ser-91 and does not alter neither ZFP36 binding to ARE-containing transcripts nor TNF-alpha mRNA decay. Interacts with XRN1. Interacts (via C-terminus and Ser-184 phosphorylated form) with YWHAB; this interaction occurs in a p38/MAPKAPK2-dependent manner, increases cytoplasmic localization of ZFP36 and protects ZFP36 from Ser-184 dephosphorylation by serine/threonine phosphatase 2A, and hence may be crucial for stabilizing ARE-containing mRNAs. Interacts (via phosphorylated form) with YWHAE. Interacts (via C-terminus) with YWHAG; this interaction occurs in a phosphorylation-dependent manner. Interacts with YWHAH; this interaction occurs in a phosphorylation-dependent manner. Interacts with YWHAQ; this interaction occurs in a phosphorylation-dependent manner. Interacts with (via C-terminus) YWHAZ; this interaction occurs in a phosphorylation-dependent manner. Does not interact with SH3KBP1. Interacts (via P-P-P-P-G repeats) with GIGYF2; the interaction is direct. Phosphorylated. Phosphorylation at serine and/or threonine residues occurs in a p38 MAPK- and MAPKAPK2-dependent manner. Phosphorylated by MAPKAPK2 at Ser-58 and Ser-184; phosphorylation increases its stability and cytoplasmic localization, promotes binding to 14-3-3 adapter proteins and inhibits the recruitment of cytoplasmic CCR4-NOT and PAN2-PAN3 deadenylase complexes to the mRNA decay machinery, thereby inhibiting ZFP36-induced ARE-containing mRNA deadenylation and decay processes. Phosphorylation by MAPKAPK2 does not impair ARE-containing RNA-binding. Phosphorylated in a MAPKAPK2- and p38 MAPK-dependent manner upon skeletal muscle satellite cell activation; this phosphorylation inhibits ZFP36-mediated mRNA decay activity, and hence stabilizes MYOD1 mRNA. Phosphorylated by MAPK1 upon mitogen stimulation. Phosphorylated at Ser-64 and Ser-91; these phosphorylations increase in a SH3KBP1-dependent manner. Phosphorylated at serine and threonine residues in a pyruvate kinase PKM- and p38 MAPK-dependent manner. Phosphorylation at Ser-58 may participate in the PKM-mediated degradation of ZFP36 in a p38 MAPK-dependent manner. Dephosphorylated by serine/threonine phosphatase 2A at Ser-184. In terms of processing, ubiquitinated; pyruvate kinase (PKM)-dependent ubiquitination leads to proteasomal degradation through a p38 MAPK signaling pathway.

The protein localises to the nucleus. The protein resides in the cytoplasm. Its subcellular location is the cytoplasmic granule. It is found in the P-body. Its function is as follows. Zinc-finger RNA-binding protein that destabilizes numerous cytoplasmic AU-rich element (ARE)-containing mRNA transcripts by promoting their poly(A) tail removal or deadenylation, and hence provide a mechanism for attenuating protein synthesis. Acts as an 3'-untranslated region (UTR) ARE mRNA-binding adapter protein to communicate signaling events to the mRNA decay machinery. Recruits deadenylase CNOT7 (and probably the CCR4-NOT complex) via association with CNOT1, and hence promotes ARE-mediated mRNA deadenylation. Also functions by recruiting components of the cytoplasmic RNA decay machinery to the bound ARE-containing mRNAs. Self regulates by destabilizing its own mRNA. Binds to 3'-UTR ARE of numerous mRNAs. Also binds to ARE of its own mRNA. Plays a role in anti-inflammatory responses; suppresses tumor necrosis factor (TNF)-alpha production by stimulating ARE-mediated TNF-alpha mRNA decay and several other inflammatory ARE-containing mRNAs in interferon (IFN)- and/or lipopolysaccharide (LPS)-induced macrophages. Also plays a role in the regulation of dendritic cell maturation at the post-transcriptional level, and hence operates as part of a negative feedback loop to limit the inflammatory response. Promotes ARE-mediated mRNA decay of hypoxia-inducible factor HIF1A mRNA during the response of endothelial cells to hypoxia. Positively regulates early adipogenesis of preadipocytes by promoting ARE-mediated mRNA decay of immediate early genes (IEGs). Negatively regulates hematopoietic/erythroid cell differentiation by promoting ARE-mediated mRNA decay of the transcription factor STAT5B mRNA. Plays a role in maintaining skeletal muscle satellite cell quiescence by promoting ARE-mediated mRNA decay of the myogenic determination factor MYOD1 mRNA. Also associates with and regulates the expression of non-ARE-containing target mRNAs at the post-transcriptional level, such as MHC class I mRNAs. Participates in association with argonaute RISC catalytic components in the ARE-mediated mRNA decay mechanism; assists microRNA (miRNA) targeting ARE-containing mRNAs. May also play a role in the regulation of cytoplasmic mRNA decapping; enhances decapping of ARE-containing RNAs, in vitro. Involved in the delivery of target ARE-mRNAs to processing bodies (PBs). In addition to its cytosolic mRNA-decay function, affects nuclear pre-mRNA processing. Negatively regulates nuclear poly(A)-binding protein PABPN1-stimulated polyadenylation activity on ARE-containing pre-mRNA during LPS-stimulated macrophages. Also involved in the regulation of stress granule (SG) and P-body (PB) formation and fusion. Plays a role in the regulation of keratinocyte proliferation, differentiation and apoptosis. Plays a role as a tumor suppressor by inhibiting cell proliferation in breast cancer cells. The protein is mRNA decay activator protein ZFP36 of Bos taurus (Bovine).